A 407-amino-acid polypeptide reads, in one-letter code: Putative aspartate aminotransferase, cytoplasmic 2 (407 aa).

An N6-(pyridoxal phosphate)lysine modification is found at lysine 249.

Belongs to the class-I pyridoxal-phosphate-dependent aminotransferase family. In terms of assembly, homodimer. Pyridoxal 5'-phosphate is required as a cofactor.

The protein localises to the cytoplasm. The enzyme catalyses L-aspartate + 2-oxoglutarate = oxaloacetate + L-glutamate. This Bos taurus (Bovine) protein is Putative aspartate aminotransferase, cytoplasmic 2 (GOT1L1).